The primary structure comprises 24 residues: 33.0 kDa cold shock protein (24 aa).

The protein belongs to the thaumatin family. In terms of assembly, homooligomer; disulfide-linked. Post-translationally, glycosylated.

The protein resides in the secreted. The protein localises to the extracellular space. It localises to the apoplast. The polypeptide is 33.0 kDa cold shock protein (Arachis hypogaea (Peanut)).